The primary structure comprises 153 residues: uncharacterized protein (153 aa).

An N-terminal signal peptide occupies residues 1–22; it reads MKAFNKLFSLVVASVLVFSLAG. C23 is lipidated: N-palmitoyl cysteine. C23 carries S-diacylglycerol cysteine lipidation.

The protein to L.monocytogenes lmo0207.

Its subcellular location is the cell membrane. This is an uncharacterized protein from Escherichia coli (strain K12).